We begin with the raw amino-acid sequence, 761 residues long: Xaa-Pro dipeptidyl-peptidase (761 aa).

Residues serine 349, aspartate 469, and histidine 499 each act as charge relay system in the active site.

Belongs to the peptidase S15 family. Homodimer.

The protein localises to the cytoplasm. The enzyme catalyses Hydrolyzes Xaa-Pro-|- bonds to release unblocked, N-terminal dipeptides from substrates including Ala-Pro-|-p-nitroanilide and (sequentially) Tyr-Pro-|-Phe-Pro-|-Gly-Pro-|-Ile.. Functionally, removes N-terminal dipeptides sequentially from polypeptides having unsubstituted N-termini provided that the penultimate residue is proline. The chain is Xaa-Pro dipeptidyl-peptidase from Streptococcus equi subsp. zooepidemicus (strain H70).